The following is a 550-amino-acid chain: Glucagon-like peptide 2 receptor (550 aa).

Residues 1–173 are Extracellular-facing; sequence MRPQPSPAVP…SFRQNVDHYA (173 aa). Intrachain disulfides connect Cys83–Cys105, Cys96–Cys137, and Cys118–Cys159. N-linked (GlcNAc...) asparagine glycosylation is found at Asn97, Asn113, Asn148, and Asn162. The chain crosses the membrane as a helical span at residues 174 to 198; it reads LLYTLQLMYTVGYSVSLISLFLALT. The Cytoplasmic segment spans residues 199-210; sequence LFLFLRKLHCTR. Residues 211–235 traverse the membrane as a helical segment; sequence NYIHMNLFASFILKVLAVLVKDMVS. The Extracellular portion of the chain corresponds to 236-261; it reads HNSYSKRPDDESGWMSYLSETSVSCR. The helical transmembrane segment at 262–285 threads the bilayer; that stretch reads SVQVLLHYFVGTNHLWLLVEGLYL. The Cytoplasmic segment spans residues 286–299; that stretch reads HTLLEPTVFPERRL. Residues 300–321 form a helical membrane-spanning segment; sequence WPKYLVVGWAFPMLFVIPWGFA. Over 322-339 the chain is Extracellular; the sequence is RAHLENTRCWATNGNLKI. Residues 340 to 362 form a helical membrane-spanning segment; sequence WWIIRGPMLLCVTVNFFIFLKIL. The Cytoplasmic portion of the chain corresponds to 363–386; the sequence is KLLISKLKAHQMCFRDYKYRLAKS. Residues 387 to 405 form a helical membrane-spanning segment; it reads TLLLIPLLGVHEVLFTFFP. The Extracellular segment spans residues 406-417; the sequence is DDQVQGFSKRIR. The helical transmembrane segment at 418–438 threads the bilayer; that stretch reads LFIQLTLSSVHGFLVALQYGF. Topologically, residues 439 to 550 are cytoplasmic; it reads ANGEVKAELR…MEEILEESEI (112 aa).

Belongs to the G-protein coupled receptor 2 family.

It localises to the cell membrane. This is a receptor for glucagon-like peptide 2. The activity of this receptor is mediated by G proteins which activate adenylyl cyclase. The protein is Glucagon-like peptide 2 receptor (Glp2r) of Rattus norvegicus (Rat).